An 899-amino-acid chain; its full sequence is Protein translocase subunit SecA (899 aa).

ATP-binding positions include Gln-87, 105 to 109, and Asp-516; that span reads GEGKT. Zn(2+)-binding residues include Cys-884, Cys-886, Cys-895, and His-896.

It belongs to the SecA family. Monomer and homodimer. Part of the essential Sec protein translocation apparatus which comprises SecA, SecYEG and auxiliary proteins SecDF. Other proteins may also be involved. Zn(2+) is required as a cofactor.

The protein localises to the cell inner membrane. It is found in the cytoplasm. The catalysed reaction is ATP + H2O + cellular proteinSide 1 = ADP + phosphate + cellular proteinSide 2.. Its function is as follows. Part of the Sec protein translocase complex. Interacts with the SecYEG preprotein conducting channel. Has a central role in coupling the hydrolysis of ATP to the transfer of proteins into and across the cell membrane, serving as an ATP-driven molecular motor driving the stepwise translocation of polypeptide chains across the membrane. The chain is Protein translocase subunit SecA from Borreliella burgdorferi (strain ATCC 35210 / DSM 4680 / CIP 102532 / B31) (Borrelia burgdorferi).